The primary structure comprises 158 residues: Anaerobic ribonucleoside-triphosphate reductase-activating protein (158 aa).

[4Fe-4S] cluster is bound by residues Cys-26, Cys-30, and Cys-33. Residues Gly-32–Tyr-34 and Gly-74 contribute to the S-adenosyl-L-methionine site.

It belongs to the organic radical-activating enzymes family. As to quaternary structure, forms a tetramer composed of two NrdD and two NrdG subunits. [4Fe-4S] cluster serves as cofactor.

It localises to the cytoplasm. It carries out the reaction glycyl-[protein] + reduced [flavodoxin] + S-adenosyl-L-methionine = glycin-2-yl radical-[protein] + semiquinone [flavodoxin] + 5'-deoxyadenosine + L-methionine + H(+). Its function is as follows. Activation of anaerobic ribonucleoside-triphosphate reductase under anaerobic conditions by generation of an organic free radical, using S-adenosylmethionine and reduced flavodoxin as cosubstrates to produce 5'-deoxy-adenosine. This chain is Anaerobic ribonucleoside-triphosphate reductase-activating protein (nrdG), found in Pasteurella multocida (strain Pm70).